The chain runs to 93 residues: Large ribosomal subunit protein bL27 (93 aa).

Residues 1-9 constitute a propeptide that is removed on maturation; the sequence is MLRLDLQFF.

This sequence belongs to the bacterial ribosomal protein bL27 family. Post-translationally, the N-terminus is cleaved by ribosomal processing cysteine protease Prp.

This is Large ribosomal subunit protein bL27 from Bacillus licheniformis (strain ATCC 14580 / DSM 13 / JCM 2505 / CCUG 7422 / NBRC 12200 / NCIMB 9375 / NCTC 10341 / NRRL NRS-1264 / Gibson 46).